The chain runs to 161 residues: Phosphopantetheine adenylyltransferase (161 aa).

Threonine 10 contacts substrate. ATP contacts are provided by residues 10–11 (TF) and histidine 18. Residues lysine 42, leucine 74, and arginine 88 each coordinate substrate. Residues 89 to 91 (GLR), glutamate 99, and 124 to 130 (NAFISSS) contribute to the ATP site.

It belongs to the bacterial CoaD family. In terms of assembly, homohexamer. Mg(2+) serves as cofactor.

The protein localises to the cytoplasm. The enzyme catalyses (R)-4'-phosphopantetheine + ATP + H(+) = 3'-dephospho-CoA + diphosphate. It functions in the pathway cofactor biosynthesis; coenzyme A biosynthesis; CoA from (R)-pantothenate: step 4/5. In terms of biological role, reversibly transfers an adenylyl group from ATP to 4'-phosphopantetheine, yielding dephospho-CoA (dPCoA) and pyrophosphate. The chain is Phosphopantetheine adenylyltransferase from Wolinella succinogenes (strain ATCC 29543 / DSM 1740 / CCUG 13145 / JCM 31913 / LMG 7466 / NCTC 11488 / FDC 602W) (Vibrio succinogenes).